An 825-amino-acid polypeptide reads, in one-letter code: Zygotic DNA replication licensing factor mcm6-B (825 aa).

A C4-type zinc finger spans residues Cys159–Cys186. The 208-residue stretch at Leu347 to Val554 folds into the MCM domain. Residue Gly397–Ser404 coordinates ATP. Residues Ser529–Asp532 carry the Arginine finger motif. A compositionally biased stretch (acidic residues) spans Asp668 to Gln679. The tract at residues Asp668 to Asn690 is disordered.

The protein belongs to the MCM family. As to quaternary structure, component of the mcm2-7 complex (RLF-M). The complex forms a toroidal hexameric ring with the proposed subunit order mcm2-mcm6-mcm4-mcm7-mcm3-mcm5 (By simililarity). Begins to associate with zmcm3, mcm4 and mcm7 into mcm complexes at the neurula stage.

Its subcellular location is the nucleus. The enzyme catalyses ATP + H2O = ADP + phosphate + H(+). In terms of biological role, acts as a component of the mcm2-7 complex (mcm complex) which is the putative replicative helicase essential for 'once per cell cycle' DNA replication initiation and elongation in eukaryotic cells. The active ATPase sites in the mcm2-7 ring are formed through the interaction surfaces of two neighboring subunits such that a critical structure of a conserved arginine finger motif is provided in trans relative to the ATP-binding site of the Walker A box of the adjacent subunit. The six ATPase active sites, however, are likely to contribute differentially to the complex helicase activity. The existence of maternal and zygotic forms of mcm3 and mcm6 suggests that specific forms of mcm2-7 complexes may be used during different stages of development. May replace mmcm6 in the mcm2-7 complex. This Xenopus laevis (African clawed frog) protein is Zygotic DNA replication licensing factor mcm6-B (zmcm6-b).